The primary structure comprises 475 residues: MAAPRMPPSRLSGIMVPAPIQDLEALRALTALFKEQRNRETAPRTIFQRVLDILKKSTQAVELACRDPSQVEHLASSLQLITECFRCLRNACIECSVNQNSIRNLDTIGVAVDLVLLFRELRVEQDSLLTAFRCGLQFLGNVASRNEDSQSIVWVHAFPELFMSCLNHPDKKIVAYCSMILFTSLNSERMKDLEENLNIAINVIEAHQKHPESEWPFLIITDHFLKSPELVEAMYGKLSNQERVTLLDIMIAKIVGDEQLTKDDISIFLRHAELIANSFVDQCRNVLKLTSEPQTEDKEALVTIRLLDVLCEMTSNTELLGYLQVFPGLMERVIDVLRVIHSVGKDSTNIFSPSDSLKAEGDIEHMTEGFKSHLIRLIGNLCYKNKENQDKVNELDGIPLILDSSNIDDNNPFMMQWVVYAVRNLTEDNSQNQDFIAKMEEQGLADASLLKKMGFEVEKSGDKLILKSNNDIPPP.

An Omega-N-methylarginine modification is found at Arg10. 2 positions are modified to phosphoserine: Ser12 and Ser77. Position 82 is a phosphothreonine (Thr82). Ser430 is modified (phosphoserine).

Belongs to the ataxin-10 family. Homooligomer. Interacts with GNB2. Interacts with IQCB1. Interacts with OGT. Post-translationally, polyubiquitinated. In terms of processing, phosphorylation at Ser-12 by AURKB promotes the association of ATXN10 with PLK1. Phosphorylation at Ser-77 and Thr-82 by PLK1 may play a role in the regulation of cytokinesis and may stimulate the proteasome-mediated degradation of ATXN10. Ubiquitous distribution. Markedly increased expression in testis, adrenals, and brain.

Its subcellular location is the cytoplasm. The protein resides in the perinuclear region. The protein localises to the midbody. It is found in the cytoskeleton. It localises to the cilium basal body. Its subcellular location is the microtubule organizing center. The protein resides in the centrosome. The protein localises to the centriole. In terms of biological role, may play a role in the regulation of cytokinesis. May play a role in signaling by stimulating protein glycosylation. Induces neuritogenesis by activating the Ras-MAP kinase pathway and is necessary for the survival of cerebellar neurons. Does not appear to play a major role in ciliogenesis. The sequence is that of Ataxin-10 (Atxn10) from Rattus norvegicus (Rat).